A 465-amino-acid polypeptide reads, in one-letter code: Pleckstrin homology domain-containing family S member 1 (465 aa).

The 116-residue stretch at 14 to 129 (EVCKQDYFIK…WVSFMSSFRQ (116 aa)) folds into the PH domain. The span at 159–173 (PSSTSEAVGSSSPRN) shows a compositional bias: polar residues. 2 disordered regions span residues 159-179 (PSST…QDKH) and 258-283 (ETSH…GDLH). Positions 258–271 (ETSHESVDSSKEEP) are enriched in basic and acidic residues.

This chain is Pleckstrin homology domain-containing family S member 1, found in Homo sapiens (Human).